Consider the following 200-residue polypeptide: Snake venom metalloproteinase hemorrhagic factor 2 (200 aa).

The Peptidase M12B domain maps to 4–200; that stretch reads KYIELVVVAD…RKPQCILNKP (197 aa). Position 7 (glutamate 7) interacts with Ca(2+). Residue asparagine 70 is glycosylated (N-linked (GlcNAc...) asparagine). Position 91 (aspartate 91) interacts with Ca(2+). Intrachain disulfides connect cysteine 115–cysteine 195, cysteine 155–cysteine 179, and cysteine 157–cysteine 162. Histidine 140 is a binding site for Zn(2+). Residue glutamate 141 is part of the active site. The Zn(2+) site is built by histidine 144 and histidine 150. Ca(2+) is bound by residues cysteine 195 and asparagine 198.

Belongs to the venom metalloproteinase (M12B) family. P-I subfamily. As to quaternary structure, monomer. It depends on Zn(2+) as a cofactor. In terms of tissue distribution, expressed by the venom gland.

The protein localises to the secreted. Snake venom zinc metalloproteinase that induces weak hemorrhage and mild myonecrosis. Shows mild myotoxicity by killing myocytes. Also induces edema in the mouse footpad at doses where hemorrhage is absent. In vitro, degrades laminin, fibronectin, and type IV collagen, suggesting this toxin play a role in local tissue damage by degrading extracellular matrix, and possibly by degrading muscle extracellular matrix. Hemorrhage is not due to cytotoxicity towards endothelial cells in culture, and may only play a minor role in local bleeding characteristic of L.muta envenomations. Also induces the synthesis of several endogenous matrix metalloproteinases, which in turn, may participate in extracellular matrix degradation. The chain is Snake venom metalloproteinase hemorrhagic factor 2 from Lachesis muta muta (Bushmaster).